Consider the following 78-residue polypeptide: Hainantoxin-XX (78 aa).

Residues 1-23 form the signal peptide; the sequence is MKSATLLALSFLLIALYFLICEA. The propeptide occupies 24–47; it reads EHSRYEEHEILEENMGDVVNLEQR. 3 disulfide bridges follow: cysteine 49–cysteine 62, cysteine 56–cysteine 66, and cysteine 61–cysteine 77.

This sequence belongs to the hainantoxin family. 20 subfamily. Expressed by the venom gland.

Its subcellular location is the secreted. Putative ion channel inhibitor. The chain is Hainantoxin-XX from Cyriopagopus hainanus (Chinese bird spider).